The following is a 309-amino-acid chain: Aspartate carbamoyltransferase catalytic subunit (309 aa).

2 residues coordinate carbamoyl phosphate: arginine 55 and threonine 56. Residue lysine 85 participates in L-aspartate binding. Carbamoyl phosphate-binding residues include arginine 106, histidine 135, and glutamine 138. 2 residues coordinate L-aspartate: arginine 168 and arginine 230. 2 residues coordinate carbamoyl phosphate: leucine 268 and proline 269.

Belongs to the aspartate/ornithine carbamoyltransferase superfamily. ATCase family. As to quaternary structure, heterododecamer (2C3:3R2) of six catalytic PyrB chains organized as two trimers (C3), and six regulatory PyrI chains organized as three dimers (R2).

It carries out the reaction carbamoyl phosphate + L-aspartate = N-carbamoyl-L-aspartate + phosphate + H(+). The protein operates within pyrimidine metabolism; UMP biosynthesis via de novo pathway; (S)-dihydroorotate from bicarbonate: step 2/3. Functionally, catalyzes the condensation of carbamoyl phosphate and aspartate to form carbamoyl aspartate and inorganic phosphate, the committed step in the de novo pyrimidine nucleotide biosynthesis pathway. The sequence is that of Aspartate carbamoyltransferase catalytic subunit from Vibrio cholerae serotype O1 (strain ATCC 39315 / El Tor Inaba N16961).